Reading from the N-terminus, the 113-residue chain is MQTPTARSSTNVYGKLVDNETRCFHYHSKADVVALRCGQCEKFYACFQCHDELNTHPFLPWRKAKFHIPCVICGACKNSLTVEEYRSTVHCKYCNHPFNPKCKNHAGYYFEDA.

The segment at 16–96 (LVDNETRCFH…STVHCKYCNH (81 aa)) adopts a CHY-type; degenerate zinc-finger fold. Zn(2+) is bound by residues cysteine 23, histidine 25, cysteine 46, cysteine 49, cysteine 73, cysteine 76, cysteine 91, and cysteine 94.

The protein localises to the cytoplasm. It localises to the nucleus. This is an uncharacterized protein from Schizosaccharomyces pombe (strain 972 / ATCC 24843) (Fission yeast).